A 240-amino-acid chain; its full sequence is Ubiquitin domain-containing protein 1 (240 aa).

Residues 1–48 form a disordered region; it reads MGGCVGRPQGESQRSQSRASGQQRKRAGRNEPLKKERPRWKSDYPMTD. The span at 12 to 22 shows a compositional bias: low complexity; that stretch reads SQRSQSRASGQ. Residues 28–42 are compositionally biased toward basic and acidic residues; it reads GRNEPLKKERPRWKS. A Ubiquitin-like domain is found at 153-228; that stretch reads FQLKVRLSTG…DTSYCKPATR (76 aa).

In terms of biological role, may be involved in the regulation of cellular senescence through a positive feedback loop with TP53. The sequence is that of Ubiquitin domain-containing protein 1 (ubtd1) from Xenopus tropicalis (Western clawed frog).